The primary structure comprises 494 residues: Probable cytochrome P450 515A1 (494 aa).

Residues 1–21 traverse the membrane as a helical segment; the sequence is MILGIILGLFIYIYLINIKFF. Cys440 contacts heme.

The protein belongs to the cytochrome P450 family. Requires heme as cofactor.

It is found in the membrane. This chain is Probable cytochrome P450 515A1 (cyp515A1), found in Dictyostelium discoideum (Social amoeba).